The chain runs to 608 residues: Glutamyl-tRNA(Gln) amidotransferase subunit E (608 aa).

The interval 401–428 (PEETRAANPDGTTRFLRPRPGAARMYPE) is disordered.

It belongs to the GatB/GatE family. GatE subfamily. Heterodimer of GatD and GatE.

The catalysed reaction is L-glutamyl-tRNA(Gln) + L-glutamine + ATP + H2O = L-glutaminyl-tRNA(Gln) + L-glutamate + ADP + phosphate + H(+). Allows the formation of correctly charged Gln-tRNA(Gln) through the transamidation of misacylated Glu-tRNA(Gln) in organisms which lack glutaminyl-tRNA synthetase. The reaction takes place in the presence of glutamine and ATP through an activated gamma-phospho-Glu-tRNA(Gln). The GatDE system is specific for glutamate and does not act on aspartate. This Pyrobaculum arsenaticum (strain DSM 13514 / JCM 11321 / PZ6) protein is Glutamyl-tRNA(Gln) amidotransferase subunit E.